A 433-amino-acid chain; its full sequence is Protein translocase subunit SecY (433 aa).

10 helical membrane passes run I17 to G37, I71 to V91, L117 to V137, G141 to V161, L184 to L204, P212 to F232, G268 to F288, Y310 to F330, L366 to N386, and Y388 to D408.

The protein belongs to the SecY/SEC61-alpha family. In terms of assembly, component of the Sec protein translocase complex. Heterotrimer consisting of SecY, SecE and SecG subunits. The heterotrimers can form oligomers, although 1 heterotrimer is thought to be able to translocate proteins. Interacts with the ribosome. Interacts with SecDF, and other proteins may be involved. Interacts with SecA.

It is found in the cell inner membrane. In terms of biological role, the central subunit of the protein translocation channel SecYEG. Consists of two halves formed by TMs 1-5 and 6-10. These two domains form a lateral gate at the front which open onto the bilayer between TMs 2 and 7, and are clamped together by SecE at the back. The channel is closed by both a pore ring composed of hydrophobic SecY resides and a short helix (helix 2A) on the extracellular side of the membrane which forms a plug. The plug probably moves laterally to allow the channel to open. The ring and the pore may move independently. This chain is Protein translocase subunit SecY, found in Rickettsia conorii (strain ATCC VR-613 / Malish 7).